A 137-amino-acid polypeptide reads, in one-letter code: Holo-[acyl-carrier-protein] synthase (137 aa).

Mg(2+) contacts are provided by Asp7 and Glu58.

It belongs to the P-Pant transferase superfamily. AcpS family. It depends on Mg(2+) as a cofactor.

The protein resides in the cytoplasm. It carries out the reaction apo-[ACP] + CoA = holo-[ACP] + adenosine 3',5'-bisphosphate + H(+). In terms of biological role, transfers the 4'-phosphopantetheine moiety from coenzyme A to a Ser of acyl-carrier-protein. This Chloroflexus aurantiacus (strain ATCC 29366 / DSM 635 / J-10-fl) protein is Holo-[acyl-carrier-protein] synthase.